The sequence spans 313 residues: DNA-directed RNA polymerase subunit alpha (313 aa).

Positions Met1–Asn226 are alpha N-terminal domain (alpha-NTD). Residues Lys243 to Glu313 are alpha C-terminal domain (alpha-CTD).

This sequence belongs to the RNA polymerase alpha chain family. As to quaternary structure, homodimer. The RNAP catalytic core consists of 2 alpha, 1 beta, 1 beta' and 1 omega subunit. When a sigma factor is associated with the core the holoenzyme is formed, which can initiate transcription.

The enzyme catalyses RNA(n) + a ribonucleoside 5'-triphosphate = RNA(n+1) + diphosphate. DNA-dependent RNA polymerase catalyzes the transcription of DNA into RNA using the four ribonucleoside triphosphates as substrates. This chain is DNA-directed RNA polymerase subunit alpha, found in Carboxydothermus hydrogenoformans (strain ATCC BAA-161 / DSM 6008 / Z-2901).